The sequence spans 95 residues: Putative regulatory protein Pmob_0099 (95 aa).

It belongs to the RemA family.

This is Putative regulatory protein Pmob_0099 from Petrotoga mobilis (strain DSM 10674 / SJ95).